Consider the following 180-residue polypeptide: MAETATIARPYAEALFRVASESSAGNLGAWSELVSEMGQVAANPDMKAVAGDPNVPGDKLAELFLSVLKSPLNDEARRFVKLLVDNGRLTVMPEIAEQFHVLKNAREGSSDVEITSAFPLEGSQLNDLVAALERKFGRKLYAQVAVDPSLIGGVSVKVGDEVLDTSVRSRLAAMQATLTA.

The protein belongs to the ATPase delta chain family. As to quaternary structure, F-type ATPases have 2 components, F(1) - the catalytic core - and F(0) - the membrane proton channel. F(1) has five subunits: alpha(3), beta(3), gamma(1), delta(1), epsilon(1). F(0) has three main subunits: a(1), b(2) and c(10-14). The alpha and beta chains form an alternating ring which encloses part of the gamma chain. F(1) is attached to F(0) by a central stalk formed by the gamma and epsilon chains, while a peripheral stalk is formed by the delta and b chains.

Its subcellular location is the cell inner membrane. F(1)F(0) ATP synthase produces ATP from ADP in the presence of a proton or sodium gradient. F-type ATPases consist of two structural domains, F(1) containing the extramembraneous catalytic core and F(0) containing the membrane proton channel, linked together by a central stalk and a peripheral stalk. During catalysis, ATP synthesis in the catalytic domain of F(1) is coupled via a rotary mechanism of the central stalk subunits to proton translocation. Its function is as follows. This protein is part of the stalk that links CF(0) to CF(1). It either transmits conformational changes from CF(0) to CF(1) or is implicated in proton conduction. This is ATP synthase subunit delta from Cupriavidus necator (strain ATCC 17699 / DSM 428 / KCTC 22496 / NCIMB 10442 / H16 / Stanier 337) (Ralstonia eutropha).